The sequence spans 353 residues: Methylthioribose-1-phosphate isomerase (353 aa).

Substrate-binding positions include 51-53 (RGA), arginine 94, and glutamine 203. Aspartate 244 serves as the catalytic Proton donor. 254-255 (NK) is a substrate binding site.

Belongs to the eIF-2B alpha/beta/delta subunits family. MtnA subfamily.

It carries out the reaction 5-(methylsulfanyl)-alpha-D-ribose 1-phosphate = 5-(methylsulfanyl)-D-ribulose 1-phosphate. The protein operates within amino-acid biosynthesis; L-methionine biosynthesis via salvage pathway; L-methionine from S-methyl-5-thio-alpha-D-ribose 1-phosphate: step 1/6. In terms of biological role, catalyzes the interconversion of methylthioribose-1-phosphate (MTR-1-P) into methylthioribulose-1-phosphate (MTRu-1-P). The chain is Methylthioribose-1-phosphate isomerase from Trichodesmium erythraeum (strain IMS101).